A 251-amino-acid polypeptide reads, in one-letter code: Hydroxyacylglutathione hydrolase (251 aa).

Positions 53, 55, 57, 58, 110, 127, and 165 each coordinate Zn(2+).

It belongs to the metallo-beta-lactamase superfamily. Glyoxalase II family. As to quaternary structure, monomer. The cofactor is Zn(2+).

It carries out the reaction an S-(2-hydroxyacyl)glutathione + H2O = a 2-hydroxy carboxylate + glutathione + H(+). It participates in secondary metabolite metabolism; methylglyoxal degradation; (R)-lactate from methylglyoxal: step 2/2. In terms of biological role, thiolesterase that catalyzes the hydrolysis of S-D-lactoyl-glutathione to form glutathione and D-lactic acid. The sequence is that of Hydroxyacylglutathione hydrolase from Blochmanniella pennsylvanica (strain BPEN).